We begin with the raw amino-acid sequence, 201 residues long: Esterase TesA (201 aa).

The N-terminal stretch at 1 to 21 (MRALLLSGCLALVLLTQQAAA) is a signal peptide. Residue S30 is the Nucleophile of the active site. Catalysis depends on residues D177 and H180.

It belongs to the 'GDSL' lipolytic enzyme family.

Its subcellular location is the secreted. It carries out the reaction a carboxylic ester + H2O = an alcohol + a carboxylate + H(+). Esterase that exhibits the highest activity towards Tween detergents and p-nitrophenyl esters of short acyl chain length. Also displays a low thioesterase activity towards palmitoyl-coenzyme A, but is not active towards acetyl-coenzyme A. This chain is Esterase TesA (tesA), found in Pseudomonas aeruginosa (strain ATCC 15692 / DSM 22644 / CIP 104116 / JCM 14847 / LMG 12228 / 1C / PRS 101 / PAO1).